A 380-amino-acid chain; its full sequence is Alkanesulfonate monooxygenase (380 aa).

The protein belongs to the SsuD family. As to quaternary structure, homotetramer.

The catalysed reaction is an alkanesulfonate + FMNH2 + O2 = an aldehyde + FMN + sulfite + H2O + 2 H(+). Its function is as follows. Catalyzes the desulfonation of aliphatic sulfonates. The sequence is that of Alkanesulfonate monooxygenase from Pectobacterium carotovorum subsp. carotovorum (strain PC1).